A 484-amino-acid chain; its full sequence is Arachin Ahy-3 (484 aa).

The first 20 residues, 1 to 20, serve as a signal peptide directing secretion; the sequence is MAKLLALSVCFCFLVLGASS. 2 disulfide bridges follow: Cys-32/Cys-65 and Cys-108/Cys-305. The region spanning 35 to 253 is the Cupin type-1 1 domain; the sequence is QRLNAQRPDN…GFQVNEDIVR (219 aa). Residues 208–233 are disordered; sequence QQRSGRQSPKGEEQEQEQENEGGNVF. The propeptide occupies 295-298; sequence DFNN. The 150-residue stretch at 311–460 folds into the Cupin type-1 2 domain; the sequence is MNIGKSTSAD…SYGLQYEQAR (150 aa). Positions 479–484 are excised as a propeptide; the sequence is MIRTVA.

The protein belongs to the 11S seed storage protein (globulins) family. In terms of assembly, hexamer; each subunit is composed of an acidic and a basic chain derived from a single precursor and linked by a disulfide bond.

The chain is Arachin Ahy-3 from Arachis hypogaea (Peanut).